A 302-amino-acid chain; its full sequence is AT-hook motif nuclear-localized protein 29 (302 aa).

The tract at residues 1–95 (MDGGYDQSGG…KPPVIVTRDS (95 aa)) is disordered. The span at 32-44 (QLHPLPQPQPQPQ) shows a compositional bias: pro residues. The segment at residues 72–84 (KRPRGRPPGSKNK) is a DNA-binding region (a.T hook). The PPC domain occupies 96–241 (PNVLRSHVLE…DEGGEGGEGG (146 aa)). The required for the binding to non-AHL interactors stretch occupies residues 164–169 (GRFEIL). The segment at 229–279 (PLEDEGGEGGEGGEVGEGGGGEGGPPPATSSSPPSGAGQGQLRGNMSGYDQ) is disordered. Residues 237–251 (GGEGGEVGEGGGGEG) show a composition bias toward gly residues.

Homodimer. Interacts with AHL5, AHL12, AHL25, AHL27, TCP4, TCP13 and EF114. As to expression, expressed in the hypocotyl and the vascular tissue of seedling.

It is found in the nucleus. Functionally, transcription factor that specifically binds AT-rich DNA sequences related to the nuclear matrix attachment regions (MARs). Acts redundantly with AHL18, AHL22 and AHL27 in the regulation of flowering and regulation of the hypocotyl elongation. Acts redundantly with AHL27/ESC to modulate hypocotyl growth inhibition in response to light. The protein is AT-hook motif nuclear-localized protein 29 of Arabidopsis thaliana (Mouse-ear cress).